The sequence spans 124 residues: Salivary protein 15 Iric-3 (124 aa).

An N-terminal signal peptide occupies residues 1-22 (MESFVAMKVVCIILLFVIAAEA). Asparagine 82 and asparagine 93 each carry an N-linked (GlcNAc...) asparagine glycan. Positions 105 to 124 (GPNNQTCHKKDECVGYIPGC) are CD4-binding.

This sequence belongs to the salp15 family. In terms of assembly, interacts with host CD4. Interacts with host DC-SIGN (CD209). Interacts with Borrelia outer surface protein C (OspC). Expressed in salivary glands. Detected in fed adult female.

It localises to the secreted. In terms of biological role, salivary tick protein that downregulates host immune system by binding to both dendritic cells, and CD4(+) T cells. Specifically binds to the CD4 coreceptor on T cells. This interaction prevents the activation of the Src kinase, Lck, and its downstream substrate Zap-70, and results in deficient activation of PLCgamma1, the repression of calcium fluxes triggered by T-cell antigen receptor (TCR) ligation, and a subsequent reduction in interleukin-2 production. This salivary protein also binds to DC-SIGN (CD209) on dendritic cells (DC) and activates the Raf-1 kinase/MEK signaling pathway that results in down-regulating expression of pro-inflammatory cytokines. Furthermore, it inhibits T cell proliferation induced by DCs. In addition, it inhibits in vitro keratinocyte inflammation induced by Borrelia burgdorferi or by the major outer surface protein (OspC) of Borrelia. In addition, it downregulates chemokines and monocyte chemoattractant protein 1, as well as several antimicrobial peptides such as defensins, cathelicidin, psoriasin, and RNase 7. Apart from its immunomodulatory activities, it is also associated with protection of Borrelia spirochetes from antibody-mediated killing through its binding to OspC. In vivo, tests on different immune disease animal models show promising therapeutic results, e.g., in inhibiting HIV infection, experimental autoimmune encephalomyelitis, transplantation rejection, and asthma. The protein is Salivary protein 15 Iric-3 of Ixodes ricinus (Common tick).